A 401-amino-acid chain; its full sequence is 8-amino-7-oxononanoate synthase (401 aa).

A substrate-binding site is contributed by Arg24. 111–112 (GF) is a binding site for pyridoxal 5'-phosphate. Position 137 (His137) interacts with substrate. Positions 183, 211, and 240 each coordinate pyridoxal 5'-phosphate. Lys243 bears the N6-(pyridoxal phosphate)lysine mark. Thr357 is a substrate binding site.

It belongs to the class-II pyridoxal-phosphate-dependent aminotransferase family. BioF subfamily. In terms of assembly, homodimer. Requires pyridoxal 5'-phosphate as cofactor.

It catalyses the reaction 6-carboxyhexanoyl-[ACP] + L-alanine + H(+) = (8S)-8-amino-7-oxononanoate + holo-[ACP] + CO2. It functions in the pathway cofactor biosynthesis; biotin biosynthesis. In terms of biological role, catalyzes the decarboxylative condensation of pimeloyl-[acyl-carrier protein] and L-alanine to produce 8-amino-7-oxononanoate (AON), [acyl-carrier protein], and carbon dioxide. This Xylella fastidiosa (strain M23) protein is 8-amino-7-oxononanoate synthase.